The chain runs to 72 residues: DNA-directed RNA polymerase subunit Rpo10 (72 aa).

Zn(2+)-binding residues include Cys-7, Cys-10, Cys-54, and Cys-55.

It belongs to the archaeal Rpo10/eukaryotic RPB10 RNA polymerase subunit family. Part of the RNA polymerase complex. The cofactor is Zn(2+).

It localises to the cytoplasm. It catalyses the reaction RNA(n) + a ribonucleoside 5'-triphosphate = RNA(n+1) + diphosphate. Functionally, DNA-dependent RNA polymerase (RNAP) catalyzes the transcription of DNA into RNA using the four ribonucleoside triphosphates as substrates. This is DNA-directed RNA polymerase subunit Rpo10 from Picrophilus torridus (strain ATCC 700027 / DSM 9790 / JCM 10055 / NBRC 100828 / KAW 2/3).